The primary structure comprises 309 residues: Probable ABC transporter permease protein YesP (309 aa).

Transmembrane regions (helical) follow at residues 29–49 (FIIG…FLSF), 84–104 (FTYV…IAVI), 114–134 (IYRT…VAIM), 167–187 (ALWT…LIFL), 217–237 (LPIL…SAFM), and 275–295 (YASA…LILF). An ABC transmembrane type-1 domain is found at 80–294 (LKVTFTYVLA…VIVGLITLIL (215 aa)).

This sequence belongs to the binding-protein-dependent transport system permease family. MalFG subfamily.

Its subcellular location is the cell membrane. In terms of biological role, part of a binding-protein-dependent transport system. Probably responsible for the translocation of the substrate across the membrane. This is Probable ABC transporter permease protein YesP (yesP) from Bacillus subtilis (strain 168).